An 846-amino-acid polypeptide reads, in one-letter code: Sucrose synthase 6 (846 aa).

The segment at 276–755 is GT-B glycosyltransferase; sequence CVFTVVIFSI…GLQRIYECYT (480 aa).

This sequence belongs to the glycosyltransferase 1 family. Plant sucrose synthase subfamily.

It carries out the reaction an NDP-alpha-D-glucose + D-fructose = a ribonucleoside 5'-diphosphate + sucrose + H(+). Its function is as follows. Sucrose-cleaving enzyme that provides UDP-glucose and fructose for various metabolic pathways. This Oryza sativa subsp. japonica (Rice) protein is Sucrose synthase 6 (SUS6).